The following is a 231-amino-acid chain: Chromosome partition protein MukE (231 aa).

The segment at 204–231 is disordered; that stretch reads TPEPSQQSLLENPTAEYDEEQTEWEDEA. Over residues 219 to 231 the composition is skewed to acidic residues; the sequence is EYDEEQTEWEDEA.

Belongs to the MukE family. Interacts, and probably forms a ternary complex, with MukF and MukB. The complex formation is stimulated by calcium or magnesium.

The protein resides in the cytoplasm. The protein localises to the nucleoid. Its function is as follows. Involved in chromosome condensation, segregation and cell cycle progression. May participate in facilitating chromosome segregation by condensation DNA from both sides of a centrally located replisome during cell division. Probably acts via its interaction with MukB and MukF. The chain is Chromosome partition protein MukE from Vibrio cholerae serotype O1 (strain ATCC 39315 / El Tor Inaba N16961).